Here is a 222-residue protein sequence, read N- to C-terminus: Large ribosomal subunit protein uL1 (222 aa).

The protein belongs to the universal ribosomal protein uL1 family. As to quaternary structure, part of the 50S ribosomal subunit.

Binds directly to 23S rRNA. Probably involved in E site tRNA release. Its function is as follows. Protein L1 is also a translational repressor protein, it controls the translation of its operon by binding to its mRNA. The chain is Large ribosomal subunit protein uL1 from Pyrobaculum neutrophilum (strain DSM 2338 / JCM 9278 / NBRC 100436 / V24Sta) (Thermoproteus neutrophilus).